The following is a 344-amino-acid chain: Nicotinate-nucleotide--dimethylbenzimidazole phosphoribosyltransferase (344 aa).

E311 acts as the Proton acceptor in catalysis.

Belongs to the CobT family.

It catalyses the reaction 5,6-dimethylbenzimidazole + nicotinate beta-D-ribonucleotide = alpha-ribazole 5'-phosphate + nicotinate + H(+). It functions in the pathway nucleoside biosynthesis; alpha-ribazole biosynthesis; alpha-ribazole from 5,6-dimethylbenzimidazole: step 1/2. Its function is as follows. Catalyzes the synthesis of alpha-ribazole-5'-phosphate from nicotinate mononucleotide (NAMN) and 5,6-dimethylbenzimidazole (DMB). The protein is Nicotinate-nucleotide--dimethylbenzimidazole phosphoribosyltransferase of Aromatoleum aromaticum (strain DSM 19018 / LMG 30748 / EbN1) (Azoarcus sp. (strain EbN1)).